A 207-amino-acid polypeptide reads, in one-letter code: Cytochrome bo(3) ubiquinol oxidase subunit 3 (207 aa).

Residues Met-1 to Gln-26 are Cytoplasmic-facing. Residues Met-27 to Phe-47 traverse the membrane as a helical segment. Over Ala-48–Asp-70 the chain is Periplasmic. A helical transmembrane segment spans residues Phe-71–Leu-91. Over Lys-92–Ala-99 the chain is Cytoplasmic. Residues Gly-100–Ile-120 form a helical membrane-spanning segment. The Periplasmic segment spans residues Tyr-121 to Gly-141. The chain crosses the membrane as a helical span at residues Phe-142 to Ile-162. Residues Met-163–Leu-185 lie on the Cytoplasmic side of the membrane. The helical transmembrane segment at Phe-186–Val-206 threads the bilayer. Residue Leu-207 is a topological domain, periplasmic.

Belongs to the cytochrome c oxidase subunit 3 family. As to quaternary structure, heterooctamer of two A chains, two B chains, two C chains and two D chains.

The protein resides in the cell inner membrane. Functionally, cytochrome bo(3) ubiquinol terminal oxidase is the component of the aerobic respiratory chain of E.coli that predominates when cells are grown at high aeration. Has proton pump activity across the membrane in addition to electron transfer, pumping 2 protons/electron. In Pseudomonas putida (Arthrobacter siderocapsulatus), this protein is Cytochrome bo(3) ubiquinol oxidase subunit 3 (cyoC).